We begin with the raw amino-acid sequence, 398 residues long: Autophagy-related protein 39 (398 aa).

Positions 8 to 11 match the ATG8-binding motif; that stretch reads WNLV. The segment at 15 to 50 is disordered; it reads RLRKGREGEEQSSKSEISLDSLHESSFAGEDDEDFD. The ATG11-binding signature appears at 52–59; it reads DVLSNTSS. The chain crosses the membrane as a helical span at residues 148–164; it reads VIMLSSLLSMTFSYLAL.

Interacts with ATG8 and ATG11.

It localises to the endoplasmic reticulum membrane. The protein localises to the preautophagosomal structure membrane. Functionally, acts as a receptor for reticulophagy and nucleophagy. Directs autophagic sequestration of double-membrane vesicles derived from the nuclear envelope and perinuclear endoplasmic reticulum (pnER) into autophagosomes. Is not required for the cytoplasm-to-vacuole targeting pathway, mitophagy, pexophagy, and non-selective autophagy. The sequence is that of Autophagy-related protein 39 from Saccharomyces cerevisiae (strain ATCC 204508 / S288c) (Baker's yeast).